A 116-amino-acid polypeptide reads, in one-letter code: Ribosome-binding factor A (116 aa).

The protein belongs to the RbfA family. As to quaternary structure, monomer. Binds 30S ribosomal subunits, but not 50S ribosomal subunits or 70S ribosomes.

The protein resides in the cytoplasm. In terms of biological role, one of several proteins that assist in the late maturation steps of the functional core of the 30S ribosomal subunit. Associates with free 30S ribosomal subunits (but not with 30S subunits that are part of 70S ribosomes or polysomes). Required for efficient processing of 16S rRNA. May interact with the 5'-terminal helix region of 16S rRNA. The sequence is that of Ribosome-binding factor A from Streptococcus pyogenes serotype M28 (strain MGAS6180).